The primary structure comprises 86 residues: Putative defensin-like protein 244 (86 aa).

An N-terminal signal peptide occupies residues 1–22; that stretch reads MKGIAMLLVSCLLFSFLSTNLA. 4 disulfides stabilise this stretch: C28/C83, C38/C67, C48/C77, and C65/C79.

The protein belongs to the DEFL family.

The protein localises to the secreted. The chain is Putative defensin-like protein 244 (SCRL11) from Arabidopsis thaliana (Mouse-ear cress).